Consider the following 261-residue polypeptide: GTP cyclohydrolase FolE2 (261 aa).

Belongs to the GTP cyclohydrolase IV family.

The catalysed reaction is GTP + H2O = 7,8-dihydroneopterin 3'-triphosphate + formate + H(+). It participates in cofactor biosynthesis; 7,8-dihydroneopterin triphosphate biosynthesis; 7,8-dihydroneopterin triphosphate from GTP: step 1/1. In terms of biological role, converts GTP to 7,8-dihydroneopterin triphosphate. This chain is GTP cyclohydrolase FolE2, found in Geobacter metallireducens (strain ATCC 53774 / DSM 7210 / GS-15).